A 159-amino-acid chain; its full sequence is Cell division protein SepF (159 aa).

The tract at residues 23–69 is disordered; it reads DYIEEDEEQKPASKSAFDSDHTVTPLASTTAPAASSTTKPFPGGRVN. Residues 44 to 64 are compositionally biased toward low complexity; it reads TVTPLASTTAPAASSTTKPFP.

This sequence belongs to the SepF family. In terms of assembly, homodimer. Interacts with FtsZ.

It localises to the cytoplasm. Functionally, cell division protein that is part of the divisome complex and is recruited early to the Z-ring. Probably stimulates Z-ring formation, perhaps through the cross-linking of FtsZ protofilaments. Its function overlaps with FtsA. In Bifidobacterium longum (strain DJO10A), this protein is Cell division protein SepF.